The primary structure comprises 145 residues: Probable disulfide formation protein (145 aa).

The helical transmembrane segment at 9 to 28 (ENLLLLIWVQAFLALAGSLF) threads the bilayer. A disulfide bridge connects residues Cys38 and Cys41. 2 helical membrane-spanning segments follow: residues 43–62 (YQRILMYPLVLIYGVAAIKK) and 69–86 (PGLFMSGIGLLVSTYHYL). A disulfide bond links Cys100 and Cys106. A helical transmembrane segment spans residues 115–137 (GFISIPFMAGVAFLIIFVLHLLI).

It belongs to the DsbB family. BdbC subfamily.

It localises to the cell membrane. Its function is as follows. Required for disulfide bond formation in some proteins. The protein is Probable disulfide formation protein of Oceanobacillus iheyensis (strain DSM 14371 / CIP 107618 / JCM 11309 / KCTC 3954 / HTE831).